We begin with the raw amino-acid sequence, 222 residues long: Noggin (222 aa).

A signal peptide spans 1–19 (MDHSQCLVTIYALMVFLGL). N61 is a glycosylation site (N-linked (GlcNAc...) asparagine). Disulfide bonds link C145–C182, C168–C218, C174–C220, and C197–C205.

The protein belongs to the noggin family. In terms of assembly, homodimer.

It localises to the secreted. Its function is as follows. Patterns the embryo by interrupting bone morphogenetic proteins (BMP) signaling. Binds BMP-4 and BMP-2 with high affinity. Can abolish BMP-4 activity by blocking binding to cognate cell-surface receptors. Capable of inducing dorsal development in embryos. Causes dorsal mesodermal differentiation of animal cap ectoderm when coexpressed with xWNT-8 and nuclear, sequence-specific DNA-binding protein xBRA. None of these molecules causes dorsal mesoderm formation when expressed alone. This Xenopus laevis (African clawed frog) protein is Noggin (nog).